A 310-amino-acid polypeptide reads, in one-letter code: 5-oxoprolinase subunit C (310 aa).

This sequence belongs to the PxpC family. In terms of assembly, forms a complex composed of PxpA, PxpB and PxpC.

It catalyses the reaction 5-oxo-L-proline + ATP + 2 H2O = L-glutamate + ADP + phosphate + H(+). In terms of biological role, catalyzes the cleavage of 5-oxoproline to form L-glutamate coupled to the hydrolysis of ATP to ADP and inorganic phosphate. In Escherichia coli (strain K12), this protein is 5-oxoprolinase subunit C.